The primary structure comprises 153 residues: Endoribonuclease YbeY (153 aa).

Zn(2+) is bound by residues H118, H122, and H128.

This sequence belongs to the endoribonuclease YbeY family. Requires Zn(2+) as cofactor.

It is found in the cytoplasm. Its function is as follows. Single strand-specific metallo-endoribonuclease involved in late-stage 70S ribosome quality control and in maturation of the 3' terminus of the 16S rRNA. The chain is Endoribonuclease YbeY from Pelagibacter ubique (strain HTCC1062).